A 729-amino-acid polypeptide reads, in one-letter code: Alpha-galactosidase AgaA (729 aa).

Substrate-binding positions include aspartate 53, tryptophan 199, 366 to 367 (DD), arginine 443, 476 to 480 (KWDMN), cysteine 526, and aspartate 548. The active-site Nucleophile is the aspartate 478. Aspartate 548 acts as the Proton donor in catalysis.

It belongs to the glycosyl hydrolase 36 family. In terms of assembly, homotetramer.

It catalyses the reaction Hydrolysis of terminal, non-reducing alpha-D-galactose residues in alpha-D-galactosides, including galactose oligosaccharides, galactomannans and galactolipids.. Not inhibited by D-galactose or sucrose. Inhibited by pharmaceutical drug 1-deoxygalactonojirimycin. Functionally, hydrolyzes the short-chain alpha-galactosaccharides raffinose and stachyose. The polypeptide is Alpha-galactosidase AgaA (Geobacillus stearothermophilus (Bacillus stearothermophilus)).